Reading from the N-terminus, the 328-residue chain is Malate dehydrogenase (328 aa).

An NAD(+)-binding site is contributed by 12–18 (GAAGQIA). Residues arginine 93 and arginine 99 each coordinate substrate. NAD(+)-binding positions include asparagine 106, glutamine 113, and 130–132 (VGN). Positions 132 and 163 each coordinate substrate. Histidine 188 functions as the Proton acceptor in the catalytic mechanism.

The protein belongs to the LDH/MDH superfamily. MDH type 2 family.

The catalysed reaction is (S)-malate + NAD(+) = oxaloacetate + NADH + H(+). Functionally, catalyzes the reversible oxidation of malate to oxaloacetate. This is Malate dehydrogenase from Burkholderia cenocepacia (strain HI2424).